The sequence spans 425 residues: Glucose-1-phosphate adenylyltransferase (425 aa).

Alpha-D-glucose 1-phosphate contacts are provided by residues Tyr110, Gly175, 190–191 (EK), and Ser208.

It belongs to the bacterial/plant glucose-1-phosphate adenylyltransferase family. As to quaternary structure, homotetramer.

It carries out the reaction alpha-D-glucose 1-phosphate + ATP + H(+) = ADP-alpha-D-glucose + diphosphate. The protein operates within glycan biosynthesis; glycogen biosynthesis. In terms of biological role, involved in the biosynthesis of ADP-glucose, a building block required for the elongation reactions to produce glycogen. Catalyzes the reaction between ATP and alpha-D-glucose 1-phosphate (G1P) to produce pyrophosphate and ADP-Glc. This chain is Glucose-1-phosphate adenylyltransferase, found in Nitrosospira multiformis (strain ATCC 25196 / NCIMB 11849 / C 71).